Consider the following 335-residue polypeptide: Adenine deaminase (335 aa).

The Zn(2+) site is built by His14, His16, and His194. The active-site Proton donor is Glu197. A Zn(2+)-binding site is contributed by Asp275. Asp276 serves as a coordination point for substrate.

The protein belongs to the metallo-dependent hydrolases superfamily. Adenosine and AMP deaminases family. Adenine deaminase type 2 subfamily. Zn(2+) is required as a cofactor.

The enzyme catalyses adenine + H2O + H(+) = hypoxanthine + NH4(+). In terms of biological role, catalyzes the hydrolytic deamination of adenine to hypoxanthine. Plays an important role in the purine salvage pathway and in nitrogen catabolism. The sequence is that of Adenine deaminase from Chlorobium phaeobacteroides (strain BS1).